Reading from the N-terminus, the 241-residue chain is Probable transcriptional regulatory protein RALTA_A0859 (241 aa).

Belongs to the TACO1 family.

Its subcellular location is the cytoplasm. In Cupriavidus taiwanensis (strain DSM 17343 / BCRC 17206 / CCUG 44338 / CIP 107171 / LMG 19424 / R1) (Ralstonia taiwanensis (strain LMG 19424)), this protein is Probable transcriptional regulatory protein RALTA_A0859.